The sequence spans 278 residues: Neuronal membrane glycoprotein M6-a (278 aa).

The residue at position 1 (Met-1) is an N-acetylmethionine. Over 1 to 22 (MEENMEEGQTQKGCFECCIKCL) the chain is Cytoplasmic. The chain crosses the membrane as a helical span at residues 23–43 (GGIPYASLIATILLYAGVALF). Over 44 to 84 (CGCGHEALSGTVNILQTYFELARTAGDTLDVFTMIDIFKYV) the chain is Extracellular. A helical transmembrane segment spans residues 85 to 105 (IYGIAAAFFVYGILLMVEGFF). At 106–127 (TTGAIKDLYGDFKITTCGRCVS) the chain is on the cytoplasmic side. Residues 128-148 (AWFIMLTYLFMLAWLGVTAFT) traverse the membrane as a helical segment. The Extracellular portion of the chain corresponds to 149–213 (SLPVYMYFNV…STELNMTFHL (65 aa)). An N-linked (GlcNAc...) asparagine glycan is attached at Asn-164. Cys-174 and Cys-192 are joined by a disulfide. N-linked (GlcNAc...) asparagine glycosylation occurs at Asn-208. Residues 214-234 (FIVALAGAGAAVIAMVHYLMV) form a helical membrane-spanning segment. Residues 235–278 (LSANWAYVKDACRMQKYEDIKSKEEQELHDIHSTRSKERLNAYT) are Cytoplasmic-facing. At Ser-256 the chain carries Phosphoserine. Residue Thr-278 is modified to Phosphothreonine.

Belongs to the myelin proteolipid protein family. As to quaternary structure, interacts with OPRM1. Interacts with palmitoyltransferase ZDHHC17/HIP14; the interaction leads to palmitoylation of GPM6A. Post-translationally, N-glycosylated. In terms of processing, palmitoylated by ZDHHC17/HIP14. Widely expressed in the CNS. Found especially in the granule cell layer of the cerebellum but not in the molecular layer or white matter. Expressed in the immature embryonic retina including the nerve fiber layer (NFL), inner plexiform layer (IPL), and outer plexiform layer (OPL). Weakly expressed in processes of Mueller glia cells.

The protein resides in the cell membrane. It localises to the cell projection. The protein localises to the axon. It is found in the growth cone. Its subcellular location is the dendritic spine. The protein resides in the filopodium. It localises to the neuron projection. Involved in neuronal differentiation, including differentiation and migration of neuronal stem cells. Plays a role in neuronal plasticity and is involved in neurite and filopodia outgrowth, filopodia motility and probably synapse formation. Gpm6a-induced filopodia formation involves mitogen-activated protein kinase (MAPK) and Src signaling pathways. Conflictingly, PubMed:22162747 reports that induced cellular protrusions are simple membrane-wrapped tubules without actin or tubulin-based cytoskeletons and with Gpm6a gliding along membrane edges indicative for a function in actin-independent membrane deformation. May be involved in neuronal NGF-dependent Ca(2+) influx. May be involved in regulation of endocytosis and intracellular trafficking of G-protein-coupled receptors (GPCRs); enhances internalization and recycling of mu-type opioid receptor. This chain is Neuronal membrane glycoprotein M6-a (Gpm6a), found in Mus musculus (Mouse).